Consider the following 227-residue polypeptide: MGDNYSTYLLDIEGTVCPISFVKETLFPYFTNKVPQLVQQDTRDSPVSNILSQFHIDNKEQLQAHILELVAKDVKDPILKQLQGYVWAHGYESGQIKAPVYADAIDFIKRKKRVFIYSSGSVKAQKLLFGYVQDPNAPAHDSLDLNSYIDGYFDINTSGKKTETQSYANILRDIGAKASEVLFLSDNPLELDAAAGVGIATGLASRPGNAPVPDGQKYQVYKNFETL.

Asp-11 and Glu-13 together coordinate Mg(2+). Substrate-binding positions include 118 to 119 and Lys-161; that span reads SS. Asp-186 contributes to the Mg(2+) binding site.

This sequence belongs to the HAD-like hydrolase superfamily. MasA/MtnC family. In terms of assembly, monomer. Requires Mg(2+) as cofactor.

It localises to the cytoplasm. It is found in the nucleus. The enzyme catalyses 5-methylsulfanyl-2,3-dioxopentyl phosphate + H2O = 1,2-dihydroxy-5-(methylsulfanyl)pent-1-en-3-one + phosphate. The protein operates within amino-acid biosynthesis; L-methionine biosynthesis via salvage pathway; L-methionine from S-methyl-5-thio-alpha-D-ribose 1-phosphate: step 3/6. It participates in amino-acid biosynthesis; L-methionine biosynthesis via salvage pathway; L-methionine from S-methyl-5-thio-alpha-D-ribose 1-phosphate: step 4/6. In terms of biological role, bifunctional enzyme that catalyzes the enolization of 2,3-diketo-5-methylthiopentyl-1-phosphate (DK-MTP-1-P) into the intermediate 2-hydroxy-3-keto-5-methylthiopentenyl-1-phosphate (HK-MTPenyl-1-P), which is then dephosphorylated to form the acireductone 1,2-dihydroxy-3-keto-5-methylthiopentene (DHK-MTPene). The polypeptide is Enolase-phosphatase E1 (Saccharomyces cerevisiae (strain ATCC 204508 / S288c) (Baker's yeast)).